We begin with the raw amino-acid sequence, 592 residues long: Aspartate--tRNA ligase (592 aa).

Residue glutamate 173 coordinates L-aspartate. Positions 197–200 are aspartate; the sequence is QLFK. Arginine 219 contacts L-aspartate. ATP-binding positions include 219 to 221 and glutamine 228; that span reads RDE. Residue histidine 449 participates in L-aspartate binding. Glutamate 483 provides a ligand contact to ATP. Arginine 490 lines the L-aspartate pocket. 535-538 is a binding site for ATP; that stretch reads GLDR.

This sequence belongs to the class-II aminoacyl-tRNA synthetase family. Type 1 subfamily. In terms of assembly, homodimer.

The protein localises to the cytoplasm. The catalysed reaction is tRNA(Asp) + L-aspartate + ATP = L-aspartyl-tRNA(Asp) + AMP + diphosphate. Catalyzes the attachment of L-aspartate to tRNA(Asp) in a two-step reaction: L-aspartate is first activated by ATP to form Asp-AMP and then transferred to the acceptor end of tRNA(Asp). In Shewanella loihica (strain ATCC BAA-1088 / PV-4), this protein is Aspartate--tRNA ligase.